Consider the following 1755-residue polypeptide: Transposon Ty1-OL Gag-Pol polyprotein (1755 aa).

3 stretches are compositionally biased toward polar residues: residues Met1–Ser23, Thr48–Ser60, and Gln127–Phe152. Disordered stretches follow at residues Met1 to Gln93, Pro126 to Pro173, and Gly352 to Thr421. Residues Thr153–Thr165 show a composition bias toward low complexity. An RNA-binding region spans residues Asn299–His401. Residues Asn402–Ser418 are compositionally biased toward low complexity. At Ser416 the chain carries Phosphoserine. Asp461 functions as the For protease activity; shared with dimeric partner in the catalytic mechanism. Positions Asn583–Cys640 are integrase-type zinc finger-like. One can recognise an Integrase catalytic domain in the interval Asn660–Pro835. Residues Asp671 and Asp736 each contribute to the Mg(2+) site. Disordered stretches follow at residues Ser956–Lys1087, Arg1092–Pro1111, and Asp1130–Ala1171. The span at Ser960–Thr969 shows a compositional bias: low complexity. Polar residues predominate over residues Ser1005–Thr1015. The segment covering Glu1038 to Ser1053 has biased composition (basic and acidic residues). Polar residues-rich tracts occupy residues Tyr1054–Asp1082 and Pro1101–Pro1111. The Bipartite nuclear localization signal signature appears at Lys1178 to Arg1212. Positions Asn1338–Gln1476 constitute a Reverse transcriptase Ty1/copia-type domain. Mg(2+) is bound by residues Asp1346, Asp1427, Asp1428, Asp1610, Glu1652, and Asp1685. The region spanning Asp1610–Lys1752 is the RNase H Ty1/copia-type domain.

In terms of assembly, the capsid protein forms a homotrimer, from which the VLPs are assembled. The protease is a homodimer, whose active site consists of two apposed aspartic acid residues. Post-translationally, initially, virus-like particles (VLPs) are composed of the structural unprocessed proteins Gag and Gag-Pol, and also contain the host initiator methionine tRNA (tRNA(i)-Met) which serves as a primer for minus-strand DNA synthesis, and a dimer of genomic Ty RNA. Processing of the polyproteins occurs within the particle and proceeds by an ordered pathway, called maturation. First, the protease (PR) is released by autocatalytic cleavage of the Gag-Pol polyprotein yielding capsid protein p45 and a Pol-p154 precursor protein. This cleavage is a prerequisite for subsequent processing of Pol-p154 at the remaining sites to release the mature structural and catalytic proteins. Maturation takes place prior to the RT reaction and is required to produce transposition-competent VLPs.

It is found in the cytoplasm. The protein localises to the nucleus. The enzyme catalyses DNA(n) + a 2'-deoxyribonucleoside 5'-triphosphate = DNA(n+1) + diphosphate. It catalyses the reaction Endonucleolytic cleavage to 5'-phosphomonoester.. Its function is as follows. Capsid protein (CA) is the structural component of the virus-like particle (VLP), forming the shell that encapsulates the retrotransposons dimeric RNA genome. The particles are assembled from trimer-clustered units and there are holes in the capsid shells that allow for the diffusion of macromolecules. CA also has nucleocapsid-like chaperone activity, promoting primer tRNA(i)-Met annealing to the multipartite primer-binding site (PBS), dimerization of Ty1 RNA and initiation of reverse transcription. Functionally, the aspartyl protease (PR) mediates the proteolytic cleavages of the Gag and Gag-Pol polyproteins after assembly of the VLP. Reverse transcriptase/ribonuclease H (RT) is a multifunctional enzyme that catalyzes the conversion of the retro-elements RNA genome into dsDNA within the VLP. The enzyme displays a DNA polymerase activity that can copy either DNA or RNA templates, and a ribonuclease H (RNase H) activity that cleaves the RNA strand of RNA-DNA heteroduplexes during plus-strand synthesis and hydrolyzes RNA primers. The conversion leads to a linear dsDNA copy of the retrotransposon that includes long terminal repeats (LTRs) at both ends. In terms of biological role, integrase (IN) targets the VLP to the nucleus, where a subparticle preintegration complex (PIC) containing at least integrase and the newly synthesized dsDNA copy of the retrotransposon must transit the nuclear membrane. Once in the nucleus, integrase performs the integration of the dsDNA into the host genome. In Saccharomyces cerevisiae (strain ATCC 204508 / S288c) (Baker's yeast), this protein is Transposon Ty1-OL Gag-Pol polyprotein (TY1B-OL).